An 87-amino-acid chain; its full sequence is Small ribosomal subunit protein uS17 (87 aa).

Belongs to the universal ribosomal protein uS17 family. In terms of assembly, part of the 30S ribosomal subunit.

In terms of biological role, one of the primary rRNA binding proteins, it binds specifically to the 5'-end of 16S ribosomal RNA. The polypeptide is Small ribosomal subunit protein uS17 (Cytophaga hutchinsonii (strain ATCC 33406 / DSM 1761 / CIP 103989 / NBRC 15051 / NCIMB 9469 / D465)).